An 86-amino-acid chain; its full sequence is MVKKEAIIKAVNGLHVRPASTFVKKAKEYSSEITIESDGKSVSGKSLFRLQTLELSSGKKLLICAEGEDEEIAASELAELIESFKE.

The region spanning 1–86 is the HPr domain; the sequence is MVKKEAIIKA…LAELIESFKE (86 aa). The active-site Pros-phosphohistidine intermediate is the H15.

This sequence belongs to the HPr family.

The protein resides in the cytoplasm. In terms of biological role, general (non sugar-specific) component of the phosphoenolpyruvate-dependent sugar phosphotransferase system (sugar PTS). This major carbohydrate active-transport system catalyzes the phosphorylation of incoming sugar substrates concomitantly with their translocation across the cell membrane. The phosphoryl group from phosphoenolpyruvate (PEP) is transferred to the phosphoryl carrier protein HPr by enzyme I. Phospho-HPr then transfers it to the PTS EIIA domain. This chain is Phosphocarrier protein HPr (ptsH), found in Borreliella burgdorferi (strain ATCC 35210 / DSM 4680 / CIP 102532 / B31) (Borrelia burgdorferi).